The primary structure comprises 255 residues: Octanoyltransferase (255 aa).

The interval 1–21 is disordered; sequence MCATPVSPSPESPRSAQAGAA. The 187-residue stretch at 56–242 folds into the BPL/LPL catalytic domain; it reads FETSDEIWLV…SLIANIDGIP (187 aa). Substrate contacts are provided by residues 96-103, 173-175, and 186-188; these read RGGQITYH, ALG, and GVS. The Acyl-thioester intermediate role is filled by Cys-204.

It belongs to the LipB family.

It localises to the cytoplasm. The catalysed reaction is octanoyl-[ACP] + L-lysyl-[protein] = N(6)-octanoyl-L-lysyl-[protein] + holo-[ACP] + H(+). The protein operates within protein modification; protein lipoylation via endogenous pathway; protein N(6)-(lipoyl)lysine from octanoyl-[acyl-carrier-protein]: step 1/2. Functionally, catalyzes the transfer of endogenously produced octanoic acid from octanoyl-acyl-carrier-protein onto the lipoyl domains of lipoate-dependent enzymes. Lipoyl-ACP can also act as a substrate although octanoyl-ACP is likely to be the physiological substrate. This is Octanoyltransferase from Paraburkholderia phymatum (strain DSM 17167 / CIP 108236 / LMG 21445 / STM815) (Burkholderia phymatum).